The sequence spans 444 residues: Phosphoglucosamine mutase (444 aa).

Residue Ser101 is the Phosphoserine intermediate of the active site. Residues Ser101, Asp239, Asp241, and Asp243 each contribute to the Mg(2+) site. Ser101 is modified (phosphoserine).

It belongs to the phosphohexose mutase family. The cofactor is Mg(2+). Post-translationally, activated by phosphorylation.

The enzyme catalyses alpha-D-glucosamine 1-phosphate = D-glucosamine 6-phosphate. Catalyzes the conversion of glucosamine-6-phosphate to glucosamine-1-phosphate. This chain is Phosphoglucosamine mutase, found in Alcanivorax borkumensis (strain ATCC 700651 / DSM 11573 / NCIMB 13689 / SK2).